The primary structure comprises 188 residues: Large ribosomal subunit protein bL32m (188 aa).

Positions 110, 113, 123, and 126 each coordinate Zn(2+). The interval 162–188 (GETPSEHDQGKRIIERERKRPSWFTQN) is disordered. Over residues 165-181 (PSEHDQGKRIIERERKR) the composition is skewed to basic and acidic residues.

This sequence belongs to the bacterial ribosomal protein bL32 family. As to quaternary structure, component of the mitochondrial ribosome large subunit (39S) which comprises a 16S rRNA and about 50 distinct proteins. MRPL32 precursor is processed by the m-AAA protease (composed of AFG3L2 and SPG7), which cleaves the N-terminal transit peptide. Cleavage by the m-AAA protease takes place prior to assembly into the large subunit, an essential step for mitochondrial ribosome (mitoribosome) assembly. Proper processing by the m-AAA protease is dependent on the zinc-binding region within the tightly folded C-terminal domain of MRPL32: zinc-dependent folding halts degradation initiated from the N-terminus and triggers the release of mature MRPL32.

It is found in the mitochondrion. Component of the mitochondrial large ribosomal subunit (mt-LSU). The mitochondrial ribosome (mitoribosome) is a large ribonucleoprotein complex responsible for the synthesis of proteins inside mitochondria. This is Large ribosomal subunit protein bL32m (MRPL32) from Bos taurus (Bovine).